Here is an 875-residue protein sequence, read N- to C-terminus: Alanine--tRNA ligase (875 aa).

4 residues coordinate Zn(2+): His-564, His-568, Cys-666, and His-670.

This sequence belongs to the class-II aminoacyl-tRNA synthetase family. The cofactor is Zn(2+).

Its subcellular location is the cytoplasm. The enzyme catalyses tRNA(Ala) + L-alanine + ATP = L-alanyl-tRNA(Ala) + AMP + diphosphate. Functionally, catalyzes the attachment of alanine to tRNA(Ala) in a two-step reaction: alanine is first activated by ATP to form Ala-AMP and then transferred to the acceptor end of tRNA(Ala). Also edits incorrectly charged Ser-tRNA(Ala) and Gly-tRNA(Ala) via its editing domain. The protein is Alanine--tRNA ligase of Mannheimia succiniciproducens (strain KCTC 0769BP / MBEL55E).